The sequence spans 159 residues: uncharacterized protein (159 aa).

Belongs to the SufE family.

This is an uncharacterized protein from Synechocystis sp. (strain ATCC 27184 / PCC 6803 / Kazusa).